We begin with the raw amino-acid sequence, 57 residues long: Small ribosomal subunit protein bS21 (57 aa).

A compositionally biased stretch (basic and acidic residues) spans 32-42 (VRRREHYEKPS). A disordered region spans residues 32-57 (VRRREHYEKPSQRRKRKLEASRRRRR). The span at 43–57 (QRRKRKLEASRRRRR) shows a compositional bias: basic residues.

The protein belongs to the bacterial ribosomal protein bS21 family.

In Synechococcus elongatus (strain ATCC 33912 / PCC 7942 / FACHB-805) (Anacystis nidulans R2), this protein is Small ribosomal subunit protein bS21.